Here is a 548-residue protein sequence, read N- to C-terminus: Esterase-5A (548 aa).

Residues 1–21 (MHLVRWLICLIQLWVQLGAAG) form the signal peptide. C87 and C106 are disulfide-bonded. N-linked (GlcNAc...) asparagine glycosylation is found at N95 and N116. Residue S210 is the Acyl-ester intermediate of the active site. A disulfide bridge connects residues C262 and C274. Residue N479 is glycosylated (N-linked (GlcNAc...) asparagine). C518 and C539 are disulfide-bonded.

This sequence belongs to the type-B carboxylesterase/lipase family.

The protein localises to the secreted. The enzyme catalyses a carboxylic ester + H2O = an alcohol + a carboxylate + H(+). In Drosophila pseudoobscura pseudoobscura (Fruit fly), this protein is Esterase-5A (Est-5A).